A 1073-amino-acid chain; its full sequence is Ubiquitin carboxyl-terminal hydrolase 53 (1073 aa).

The USP domain maps to 30–351; sequence KGLLNEPGQN…QPLLLFYANP (322 aa). The Nucleophile role is filled by cysteine 41. Residues histidine 66, cysteine 68, cysteine 73, cysteine 76, histidine 132, cysteine 144, cysteine 149, histidine 152, cysteine 165, cysteine 168, cysteine 224, and cysteine 228 each contribute to the Zn(2+) site. Histidine 301 (proton acceptor) is an active-site residue. Disordered stretches follow at residues 391–437 and 485–636; these read LKEN…HIDQ and LSHF…PKQK. The segment covering 407-418 has biased composition (polar residues); sequence KFPTDNISSSNR. A compositionally biased stretch (low complexity) spans 524 to 541; that stretch reads QSRASAQIISSSKSQILA. The span at 553-563 shows a compositional bias: polar residues; that stretch reads DNGTGYDTDSS. Over residues 612 to 627 the composition is skewed to low complexity; that stretch reads NISNKPKSSKDPSFSN.

The protein belongs to the peptidase C19 family. Interacts (via the C-terminal region) with the heterodimer TJP1:TJP2. Expressed predominantly in skeletal muscle and heart.

Its subcellular location is the cell junction. It is found in the tight junction. The catalysed reaction is Thiol-dependent hydrolysis of ester, thioester, amide, peptide and isopeptide bonds formed by the C-terminal Gly of ubiquitin (a 76-residue protein attached to proteins as an intracellular targeting signal).. Its function is as follows. Deubiquitinase that mediates 'Lys-63'-linked deubiquitination of tight junction proteins, such as MARVELD2 and LSR, and which is involved in the survival of auditory hair cells and hearing. Specifically cleaves 'Lys-63'-linked polyubiquitin chains composed of at least 3 ubiquitin molecules, while it is not able to deubiquitinate substrates with shorter ubiquitin chains: recognizes ubiquitin chain in position S2 and catalyzes en bloc cleavage of polyubiquitin chains from substrate proteins. Probably acts by modulating the barrier properties and mechanical stability of tight junctions via deubiquitination of MARVELD2 and LSR. This is Ubiquitin carboxyl-terminal hydrolase 53 from Homo sapiens (Human).